We begin with the raw amino-acid sequence, 419 residues long: Hyaluronan synthase (419 aa).

Helical transmembrane passes span 8–28 (LIVL…MYLF), 33–53 (VGIY…LSFL), 318–338 (IVAL…VAIG), 345–365 (AIQL…IVAL), and 376–396 (PASF…LQPL).

It belongs to the NodC/HAS family. Mg(2+) serves as cofactor.

The protein localises to the cell membrane. The enzyme catalyses [hyaluronan](n) + UDP-N-acetyl-alpha-D-glucosamine = N-acetyl-beta-D-glucosaminyl-(1-&gt;4)-[hyaluronan](n) + UDP + H(+). The catalysed reaction is N-acetyl-beta-D-glucosaminyl-(1-&gt;4)-[hyaluronan](n) + UDP-alpha-D-glucuronate = [hyaluronan](n+1) + UDP + H(+). It functions in the pathway glycan biosynthesis; hyaluronan biosynthesis. Its function is as follows. Glycosaminoglycan synthesis. The hyaluronic acid capsule is involved in the pathogenicity of group A Streptococci; it may be the major virulence determinant. The sequence is that of Hyaluronan synthase (hasA) from Streptococcus pyogenes serotype M6 (strain ATCC BAA-946 / MGAS10394).